A 102-amino-acid polypeptide reads, in one-letter code: Small ribosomal subunit protein uS10 (102 aa).

It belongs to the universal ribosomal protein uS10 family. Part of the 30S ribosomal subunit.

In terms of biological role, involved in the binding of tRNA to the ribosomes. This chain is Small ribosomal subunit protein uS10, found in Pyrococcus horikoshii (strain ATCC 700860 / DSM 12428 / JCM 9974 / NBRC 100139 / OT-3).